A 479-amino-acid polypeptide reads, in one-letter code: Ribosomal RNA small subunit methyltransferase F (479 aa).

S-adenosyl-L-methionine is bound by residues Ala128–Lys134, Glu152, Asp179, and Asp197. The active-site Nucleophile is the Cys250.

Belongs to the class I-like SAM-binding methyltransferase superfamily. RsmB/NOP family.

It is found in the cytoplasm. It catalyses the reaction cytidine(1407) in 16S rRNA + S-adenosyl-L-methionine = 5-methylcytidine(1407) in 16S rRNA + S-adenosyl-L-homocysteine + H(+). Specifically methylates the cytosine at position 1407 (m5C1407) of 16S rRNA. The chain is Ribosomal RNA small subunit methyltransferase F from Shewanella halifaxensis (strain HAW-EB4).